The primary structure comprises 178 residues: Cytochrome b6-f complex iron-sulfur subunit 3 (178 aa).

The helical transmembrane segment at 20–42 threads the bilayer; that stretch reads FITGATVAVTAGAALYPAGKFLI. The 97-residue stretch at 65–161 folds into the Rieske domain; the sequence is PASQILAEPP…VAVIDNSILI (97 aa). The [2Fe-2S] cluster site is built by cysteine 107, histidine 109, cysteine 125, and histidine 128. Cysteines 112 and 127 form a disulfide.

It belongs to the Rieske iron-sulfur protein family. The 4 large subunits of the cytochrome b6-f complex are cytochrome b6, subunit IV (17 kDa polypeptide, PetD), cytochrome f and the Rieske protein, while the 4 small subunits are PetG, PetL, PetM and PetN. The complex functions as a dimer. The cofactor is [2Fe-2S] cluster.

It is found in the cellular thylakoid membrane. The catalysed reaction is 2 oxidized [plastocyanin] + a plastoquinol + 2 H(+)(in) = 2 reduced [plastocyanin] + a plastoquinone + 4 H(+)(out). In terms of biological role, component of the cytochrome b6-f complex, which mediates electron transfer between photosystem II (PSII) and photosystem I (PSI), cyclic electron flow around PSI, and state transitions. The protein is Cytochrome b6-f complex iron-sulfur subunit 3 of Nostoc sp. (strain PCC 7120 / SAG 25.82 / UTEX 2576).